A 1006-amino-acid chain; its full sequence is Cytosolic carboxypeptidase 3 (1006 aa).

Residues 304–576 (YPYTYSNLQE…HFCDSLLDYC (273 aa)) enclose the Peptidase M14 domain. Zn(2+) is bound by residues His368, Glu371, and His464. Glu540 functions as the Proton donor/acceptor in the catalytic mechanism. Positions 790-810 (ESHHQLKSKAKRCSSFQSKRT) are disordered.

The protein belongs to the peptidase M14 family. Zn(2+) is required as a cofactor. Widely expressed. Expressed abundantly in tissues with m otile cilia such as testis, lung and trachea. Abundantly expressed in pituitary and kidney, moderately expressed in brain, eye, fat, pancreas, stomach, and adrenal.

It localises to the cytoplasm. The protein localises to the cytosol. The catalysed reaction is (L-glutamyl)(n+1)-gamma-L-glutamyl-L-glutamyl-[protein] + H2O = (L-glutamyl)(n)-gamma-L-glutamyl-L-glutamyl-[protein] + L-glutamate. Its function is as follows. Metallocarboxypeptidase that mediates deglutamylation of tubulin and non-tubulin target proteins. Catalyzes the removal of polyglutamate side chains present on the gamma-carboxyl group of glutamate residues within the C-terminal tail of tubulin protein. Specifically cleaves tubulin long-side-chains, while it is not able to remove the branching point glutamate. Also catalyzes the removal of polyglutamate residues from the carboxy-terminus of non-tubulin proteins such as MYLK. May catalyze the hydrolysis of aspartate from the carboxy-terminus of target proteins. Does not show detyrosinase or deglycylase activities from the carboxy-terminus of target proteins. The sequence is that of Cytosolic carboxypeptidase 3 from Mus musculus (Mouse).